The sequence spans 369 residues: Glutamate 5-kinase (369 aa).

K9 provides a ligand contact to ATP. Substrate-binding residues include S49, D136, and N148. ATP contacts are provided by residues 168–169 (TD) and 210–216 (TGGMLTK). The region spanning 275 to 355 (QGSIWVDKGA…KGVLIYRDDW (81 aa)) is the PUA domain.

It belongs to the glutamate 5-kinase family.

Its subcellular location is the cytoplasm. The catalysed reaction is L-glutamate + ATP = L-glutamyl 5-phosphate + ADP. The protein operates within amino-acid biosynthesis; L-proline biosynthesis; L-glutamate 5-semialdehyde from L-glutamate: step 1/2. In terms of biological role, catalyzes the transfer of a phosphate group to glutamate to form L-glutamate 5-phosphate. The chain is Glutamate 5-kinase from Streptococcus pneumoniae (strain Hungary19A-6).